Here is a 232-residue protein sequence, read N- to C-terminus: 7-cyano-7-deazaguanine synthase (232 aa).

Position 7 to 17 (7 to 17 (CSGGLDSVSLA)) interacts with ATP. Positions 185, 193, 196, and 199 each coordinate Zn(2+).

This sequence belongs to the QueC family. Zn(2+) is required as a cofactor.

The catalysed reaction is 7-carboxy-7-deazaguanine + NH4(+) + ATP = 7-cyano-7-deazaguanine + ADP + phosphate + H2O + H(+). It functions in the pathway purine metabolism; 7-cyano-7-deazaguanine biosynthesis. Catalyzes the ATP-dependent conversion of 7-carboxy-7-deazaguanine (CDG) to 7-cyano-7-deazaguanine (preQ(0)). This Brucella abortus (strain S19) protein is 7-cyano-7-deazaguanine synthase.